The following is a 209-amino-acid chain: Large ribosomal subunit protein uL3 (209 aa).

Glutamine 150 carries the post-translational modification N5-methylglutamine.

It belongs to the universal ribosomal protein uL3 family. Part of the 50S ribosomal subunit. Forms a cluster with proteins L14 and L19. Post-translationally, methylated by PrmB.

Functionally, one of the primary rRNA binding proteins, it binds directly near the 3'-end of the 23S rRNA, where it nucleates assembly of the 50S subunit. The polypeptide is Large ribosomal subunit protein uL3 (Salmonella arizonae (strain ATCC BAA-731 / CDC346-86 / RSK2980)).